The primary structure comprises 166 residues: Protein SprT (166 aa).

Residues 21 to 160 enclose the SprT-like domain; the sequence is ANQHFSREFP…CQQCQQTLAF (140 aa). Histidine 74 lines the Zn(2+) pocket. Glutamate 75 is an active-site residue. Histidine 78 serves as a coordination point for Zn(2+).

It belongs to the SprT family. Zn(2+) serves as cofactor.

It localises to the cytoplasm. This Vibrio atlanticus (strain LGP32) (Vibrio splendidus (strain Mel32)) protein is Protein SprT.